The following is a 1358-amino-acid chain: Retrotransposon-like protein 1 (1358 aa).

Disordered regions lie at residues 1 to 159 and 563 to 616; these read MIEP…TEHS and ADVF…TAPW. Residues 19–30 show a composition bias toward low complexity; sequence SSKQMESSEGSS. Over residues 65 to 79 the composition is skewed to acidic residues; that stretch reads EMEELPTDLLQDMEE. Basic and acidic residues predominate over residues 131–149; that stretch reads AREEQEAHTDLKESGREET. Residues 583-592 show a composition bias toward acidic residues; that stretch reads GSDDLSESEP. A run of 2 helical transmembrane segments spans residues 1083-1099 and 1126-1146; these read LLYW…LVLL and LILD…TQLL. Disordered regions lie at residues 1250-1283 and 1338-1358; these read DGLQ…PRHL and QPRE…ANLD. Over residues 1267–1276 the composition is skewed to low complexity; the sequence is APPSHTAATH. The segment covering 1338-1347 has biased composition (basic and acidic residues); the sequence is QPREQARLEE. A compositionally biased stretch (acidic residues) spans 1348-1358; that stretch reads LPDEDEDANLD.

It localises to the membrane. In terms of biological role, plays an essential role in capillaries endothelial cells for the maintenance of feto-maternal interface and for development of the placenta. The protein is Retrotransposon-like protein 1 (RTL1) of Homo sapiens (Human).